The chain runs to 291 residues: 4-hydroxy-tetrahydrodipicolinate synthase (291 aa).

Thr-44 contributes to the pyruvate binding site. The Proton donor/acceptor role is filled by Tyr-132. Lys-160 serves as the catalytic Schiff-base intermediate with substrate. Val-202 lines the pyruvate pocket.

This sequence belongs to the DapA family. In terms of assembly, homotetramer; dimer of dimers.

Its subcellular location is the cytoplasm. The enzyme catalyses L-aspartate 4-semialdehyde + pyruvate = (2S,4S)-4-hydroxy-2,3,4,5-tetrahydrodipicolinate + H2O + H(+). It participates in amino-acid biosynthesis; L-lysine biosynthesis via DAP pathway; (S)-tetrahydrodipicolinate from L-aspartate: step 3/4. In terms of biological role, catalyzes the condensation of (S)-aspartate-beta-semialdehyde [(S)-ASA] and pyruvate to 4-hydroxy-tetrahydrodipicolinate (HTPA). This chain is 4-hydroxy-tetrahydrodipicolinate synthase, found in Clostridium perfringens (strain ATCC 13124 / DSM 756 / JCM 1290 / NCIMB 6125 / NCTC 8237 / Type A).